The chain runs to 240 residues: MNIQGLTIAYKQKVAIDDVTLQIATGKLTGIVGPNGAGKSTLLKGMMGLVPREKGQVTLDNKPLTYWRKKIAYVPQRSEVDLTFPITVFDMVLLGTYPALGLIKRPGKKEKQLAFDALEQVEMTAFSKRQIGELSGGQLQRVFIARALAQHAEIFFLDEPFAGIDMASEALIMKLLKKLRDNGKTIVVVHHDFHKVAAYFDDIILLNKKLVAHGPVEQTFTEEKIQFAYGDAPVAFAAGV.

Positions 1 to 233 (MNIQGLTIAY…KIQFAYGDAP (233 aa)) constitute an ABC transporter domain. 33-40 (GPNGAGKS) is an ATP binding site.

The protein belongs to the ABC transporter superfamily.

It is found in the cell membrane. This protein is probably a component of a manganese permease, a binding protein-dependent, ATP-driven transport system. Probably responsible for energy coupling to the transport system. The protein is Manganese transport system ATP-binding protein MntB (mntB) of Listeria innocua serovar 6a (strain ATCC BAA-680 / CLIP 11262).